Consider the following 1087-residue polypeptide: Exoglucanase XynX (1087 aa).

The first 30 residues, 1–30, serve as a signal peptide directing secretion; the sequence is MKNNLSKFVSIFTAFIMIFGTSLFFPHVSA. Residues 37–188 form the CBM-cenC domain; it reads ANLVSNGDFE…YIDDVVVTPQ (152 aa). Residues 204–527 enclose the GH10 domain; it reads QNDIPDLSSV…KPAYWAIADP (324 aa). Glu-347 (proton donor) is an active-site residue. Residue Asp-389 is part of the active site. Glu-452 (nucleophile) is an active-site residue. SLH domains lie at 903-966, 967-1025, and 1028-1087; these read KKSV…YNGE, FSDV…KEEN, and ATSF…SNNL.

Belongs to the glycosyl hydrolase 10 (cellulase F) family.

It carries out the reaction Hydrolysis of (1-&gt;4)-beta-D-glucosidic linkages in cellulose and cellotetraose, releasing cellobiose from the non-reducing ends of the chains.. This Acetivibrio thermocellus (Hungateiclostridium thermocellum) protein is Exoglucanase XynX (xynX).